The sequence spans 228 residues: UPF0328 protein ECU07_0040 (228 aa).

This sequence belongs to the UPF0328 family.

The protein is UPF0328 protein ECU07_0040 of Encephalitozoon cuniculi (strain GB-M1) (Microsporidian parasite).